The following is a 439-amino-acid chain: Serine--tRNA ligase (439 aa).

237 to 239 (TAE) lines the L-serine pocket. 268-270 (RAE) provides a ligand contact to ATP. E291 lines the L-serine pocket. 362–365 (EISS) contacts ATP. S397 serves as a coordination point for L-serine.

Belongs to the class-II aminoacyl-tRNA synthetase family. Type-1 seryl-tRNA synthetase subfamily. In terms of assembly, homodimer. The tRNA molecule binds across the dimer.

It localises to the cytoplasm. It carries out the reaction tRNA(Ser) + L-serine + ATP = L-seryl-tRNA(Ser) + AMP + diphosphate + H(+). It catalyses the reaction tRNA(Sec) + L-serine + ATP = L-seryl-tRNA(Sec) + AMP + diphosphate + H(+). It functions in the pathway aminoacyl-tRNA biosynthesis; selenocysteinyl-tRNA(Sec) biosynthesis; L-seryl-tRNA(Sec) from L-serine and tRNA(Sec): step 1/1. Catalyzes the attachment of serine to tRNA(Ser). Is also able to aminoacylate tRNA(Sec) with serine, to form the misacylated tRNA L-seryl-tRNA(Sec), which will be further converted into selenocysteinyl-tRNA(Sec). This is Serine--tRNA ligase from Afipia carboxidovorans (strain ATCC 49405 / DSM 1227 / KCTC 32145 / OM5) (Oligotropha carboxidovorans).